The sequence spans 314 residues: Regulator of microtubule dynamics protein 1 (314 aa).

K165 bears the N6-succinyllysine mark. TPR repeat units follow at residues 168-204 (AICL…NPKD) and 222-258 (PWYQ…DPNF).

The protein belongs to the RMDN family. As to quaternary structure, interacts with microtubules.

It is found in the cytoplasm. It localises to the cytoskeleton. Its subcellular location is the spindle. The protein resides in the spindle pole. The sequence is that of Regulator of microtubule dynamics protein 1 (RMDN1) from Homo sapiens (Human).